The following is a 179-amino-acid chain: Inner membrane-spanning protein YciB (179 aa).

The next 5 membrane-spanning stretches (helical) occupy residues 3 to 23 (FLYD…FGIY), 49 to 69 (NALI…LWLQ), 76 to 96 (WKPT…QWLF), 119 to 139 (LNLA…YVAY), and 149 to 169 (FKLF…TLLL).

This sequence belongs to the YciB family.

Its subcellular location is the cell inner membrane. Its function is as follows. Plays a role in cell envelope biogenesis, maintenance of cell envelope integrity and membrane homeostasis. This is Inner membrane-spanning protein YciB from Methylobacillus flagellatus (strain ATCC 51484 / DSM 6875 / VKM B-1610 / KT).